The following is a 96-amino-acid chain: Co-chaperonin GroES (96 aa).

Belongs to the GroES chaperonin family. Heptamer of 7 subunits arranged in a ring. Interacts with the chaperonin GroEL.

It localises to the cytoplasm. Functionally, together with the chaperonin GroEL, plays an essential role in assisting protein folding. The GroEL-GroES system forms a nano-cage that allows encapsulation of the non-native substrate proteins and provides a physical environment optimized to promote and accelerate protein folding. GroES binds to the apical surface of the GroEL ring, thereby capping the opening of the GroEL channel. This chain is Co-chaperonin GroES, found in Coxiella burnetii (strain Dugway 5J108-111).